The primary structure comprises 700 residues: Transketolase (700 aa).

Substrate is bound at residue His45. Thiamine diphosphate-binding positions include Thr48, His85, and 133–135 (GPL). Position 177 (Asp177) interacts with Mg(2+). The thiamine diphosphate site is built by Gly178 and Asn207. Residues Asn207 and Ile209 each coordinate Mg(2+). Residues His283, Arg378, and Ser405 each coordinate substrate. A thiamine diphosphate-binding site is contributed by His283. Glu441 acts as the Proton donor in catalysis. Thiamine diphosphate is bound at residue Phe467. The substrate site is built by His491, Asp499, and Arg552.

The protein belongs to the transketolase family. In terms of assembly, homodimer. Mg(2+) is required as a cofactor. Ca(2+) serves as cofactor. Requires Mn(2+) as cofactor. It depends on Co(2+) as a cofactor. The cofactor is thiamine diphosphate.

It carries out the reaction D-sedoheptulose 7-phosphate + D-glyceraldehyde 3-phosphate = aldehydo-D-ribose 5-phosphate + D-xylulose 5-phosphate. In terms of biological role, catalyzes the transfer of a two-carbon ketol group from a ketose donor to an aldose acceptor, via a covalent intermediate with the cofactor thiamine pyrophosphate. This Mycobacterium bovis (strain ATCC BAA-935 / AF2122/97) protein is Transketolase (tkt).